Here is a 76-residue protein sequence, read N- to C-terminus: UPF0729 protein C18orf32 (76 aa).

A necessary for its localzation to the endoplasmic reticulum and lipid droplets region spans residues 1–37 (MVCIPCIVIPVLLWIYKKFLEPYIYPLVSPFVSRIWP). Residues 46–76 (DTNKGKVNFKGADMNGLPTKGPTEICDKKKD) are disordered.

It belongs to the UPF0729 family. Interacts with DERL1 and AMFR. In terms of processing, undergoes ER-associated degradation (ERAD).

The protein resides in the endoplasmic reticulum. It localises to the lipid droplet. May activate the NF-kappa-B signaling pathway. In Homo sapiens (Human), this protein is UPF0729 protein C18orf32 (C18orf32).